The sequence spans 124 residues: Sporulation initiation phosphotransferase F (124 aa).

The Response regulatory domain maps to 5–119 (KILIVDDQYG…EIRDAVKKYL (115 aa)). 4 residues coordinate Mg(2+): Asp10, Asp11, Asp54, and Lys56. Asp54 bears the 4-aspartylphosphate mark.

The cofactor is Mg(2+). Post-translationally, phosphorylated by KinA and KinB. Dephosphorylated by RapA and RapB.

The protein resides in the cytoplasm. In terms of biological role, key element in the phosphorelay regulating sporulation initiation. Phosphorylation of spo0B during sporulation initiation. In Bacillus subtilis (strain 168), this protein is Sporulation initiation phosphotransferase F (spo0F).